The chain runs to 132 residues: Fatty acid-binding protein, brain (132 aa).

Val-2 bears the N-acetylvaline mark. 127–129 is a binding site for a fatty acid; sequence RHY.

This sequence belongs to the calycin superfamily. Fatty-acid binding protein (FABP) family. In terms of assembly, monomer.

The protein localises to the cytoplasm. Functionally, FABPs are thought to play a role in the intracellular transport of long-chain fatty acids and their acyl-CoA esters. Binds oleic and palmitic acids but not palmitoyl CoA. The chain is Fatty acid-binding protein, brain (FABP7) from Bos taurus (Bovine).